Consider the following 453-residue polypeptide: Phosphoglucosamine mutase (453 aa).

The Phosphoserine intermediate role is filled by serine 110. Residues serine 110, aspartate 248, aspartate 250, and aspartate 252 each coordinate Mg(2+). Serine 110 is modified (phosphoserine).

This sequence belongs to the phosphohexose mutase family. The cofactor is Mg(2+). Post-translationally, activated by phosphorylation.

The catalysed reaction is alpha-D-glucosamine 1-phosphate = D-glucosamine 6-phosphate. Its function is as follows. Catalyzes the conversion of glucosamine-6-phosphate to glucosamine-1-phosphate. This is Phosphoglucosamine mutase from Mycolicibacterium smegmatis (strain ATCC 700084 / mc(2)155) (Mycobacterium smegmatis).